The following is a 139-amino-acid chain: Small ribosomal subunit protein uS11A (139 aa).

Residues 119-139 form a disordered region; sequence DVTPIPTDSTRRKGGRRGRRL. The span at 130–139 shows a compositional bias: basic residues; it reads RKGGRRGRRL.

It belongs to the universal ribosomal protein uS11 family. As to quaternary structure, component of the small ribosomal subunit (SSU). Mature yeast ribosomes consist of a small (40S) and a large (60S) subunit. The 40S small subunit contains 1 molecule of ribosomal RNA (18S rRNA) and at least 33 different proteins. The large 60S subunit contains 3 rRNA molecules (25S, 5.8S and 5S rRNA) and at least 46 different proteins. uS11 interacts with eS1 forming part of the mRNA exit tunnel. uS11 interacts with snoRNA U3. uS11 interacts with MPP10. Component of the ribosomal small subunit (SSU) processome composed of at least 40 protein subunits and snoRNA U3.

It localises to the cytoplasm. It is found in the nucleus. The protein resides in the nucleolus. Component of the ribosome, a large ribonucleoprotein complex responsible for the synthesis of proteins in the cell. The small ribosomal subunit (SSU) binds messenger RNAs (mRNAs) and translates the encoded message by selecting cognate aminoacyl-transfer RNA (tRNA) molecules. The large subunit (LSU) contains the ribosomal catalytic site termed the peptidyl transferase center (PTC), which catalyzes the formation of peptide bonds, thereby polymerizing the amino acids delivered by tRNAs into a polypeptide chain. The nascent polypeptides leave the ribosome through a tunnel in the LSU and interact with protein factors that function in enzymatic processing, targeting, and the membrane insertion of nascent chains at the exit of the ribosomal tunnel. uS11 is involved in nucleolar processing of pre-18S ribosomal RNA and ribosome assembly. In Schizosaccharomyces pombe (strain 972 / ATCC 24843) (Fission yeast), this protein is Small ribosomal subunit protein uS11A (rps1401).